A 515-amino-acid chain; its full sequence is 2,3-bisphosphoglycerate-independent phosphoglycerate mutase (515 aa).

The Mn(2+) site is built by D14 and S64. S64 (phosphoserine intermediate) is an active-site residue. Residues H125, 155–156 (RD), R187, R193, 263–266 (RADR), and K337 each bind substrate. 5 residues coordinate Mn(2+): D404, H408, D445, H446, and H464.

The protein belongs to the BPG-independent phosphoglycerate mutase family. As to quaternary structure, monomer. Mn(2+) serves as cofactor.

It carries out the reaction (2R)-2-phosphoglycerate = (2R)-3-phosphoglycerate. It functions in the pathway carbohydrate degradation; glycolysis; pyruvate from D-glyceraldehyde 3-phosphate: step 3/5. Catalyzes the interconversion of 2-phosphoglycerate and 3-phosphoglycerate. In Cronobacter sakazakii (strain ATCC BAA-894) (Enterobacter sakazakii), this protein is 2,3-bisphosphoglycerate-independent phosphoglycerate mutase.